Reading from the N-terminus, the 126-residue chain is Aspartate 1-decarboxylase (126 aa).

S25 serves as the catalytic Schiff-base intermediate with substrate; via pyruvic acid. Pyruvic acid (Ser) is present on S25. Residue T57 coordinates substrate. Y58 (proton donor) is an active-site residue. 73 to 75 provides a ligand contact to substrate; the sequence is GAA.

It belongs to the PanD family. Heterooctamer of four alpha and four beta subunits. Pyruvate serves as cofactor. Post-translationally, is synthesized initially as an inactive proenzyme, which is activated by self-cleavage at a specific serine bond to produce a beta-subunit with a hydroxyl group at its C-terminus and an alpha-subunit with a pyruvoyl group at its N-terminus.

Its subcellular location is the cytoplasm. The enzyme catalyses L-aspartate + H(+) = beta-alanine + CO2. Its pathway is cofactor biosynthesis; (R)-pantothenate biosynthesis; beta-alanine from L-aspartate: step 1/1. Its function is as follows. Catalyzes the pyruvoyl-dependent decarboxylation of aspartate to produce beta-alanine. The chain is Aspartate 1-decarboxylase from Halorhodospira halophila (strain DSM 244 / SL1) (Ectothiorhodospira halophila (strain DSM 244 / SL1)).